The primary structure comprises 635 residues: GTPase-GDP dissociation stimulator vimar (635 aa).

ARM repeat units lie at residues 72-118 (KSEV…NICY), 346-391 (TDSH…NLVI), 392-432 (PKPN…MTVD), and 510-550 (RSSL…ILSV).

Interacts with Miro.

The protein localises to the endoplasmic reticulum. It is found in the mitochondrion. Its subcellular location is the cytoplasm. It localises to the cytosol. In terms of biological role, probably acts as a GEF (guanine nucleotide exchange factor) for the Rho family of small GTP-binding proteins (G proteins) that stimulates the dissociation of GDP to enable subsequent binding of GTP. May also chaperone the processing and/or trafficking of small GTPases independently of GEF activity. By interacting with Miro, promotes mitochondrial fission in response to high calcium concentrations. This is GTPase-GDP dissociation stimulator vimar from Drosophila melanogaster (Fruit fly).